The primary structure comprises 501 residues: Lysine--tRNA ligase (501 aa).

Mg(2+)-binding residues include Glu-411 and Glu-418.

This sequence belongs to the class-II aminoacyl-tRNA synthetase family. As to quaternary structure, homodimer. Mg(2+) is required as a cofactor.

It localises to the cytoplasm. It carries out the reaction tRNA(Lys) + L-lysine + ATP = L-lysyl-tRNA(Lys) + AMP + diphosphate. The sequence is that of Lysine--tRNA ligase from Pseudomonas aeruginosa (strain LESB58).